Here is a 148-residue protein sequence, read N- to C-terminus: Large ribosomal subunit protein uL13 (148 aa).

Belongs to the universal ribosomal protein uL13 family. In terms of assembly, part of the 50S ribosomal subunit.

Its function is as follows. This protein is one of the early assembly proteins of the 50S ribosomal subunit, although it is not seen to bind rRNA by itself. It is important during the early stages of 50S assembly. The protein is Large ribosomal subunit protein uL13 of Oenococcus oeni (strain ATCC BAA-331 / PSU-1).